A 246-amino-acid chain; its full sequence is Small ribosomal subunit protein uS2 (246 aa).

The disordered stretch occupies residues 224–246 (AKQGEESAETEAKEAETTETTTA). A compositionally biased stretch (basic and acidic residues) spans 225-239 (KQGEESAETEAKEAE).

Belongs to the universal ribosomal protein uS2 family.

This is Small ribosomal subunit protein uS2 from Bacillus licheniformis (strain ATCC 14580 / DSM 13 / JCM 2505 / CCUG 7422 / NBRC 12200 / NCIMB 9375 / NCTC 10341 / NRRL NRS-1264 / Gibson 46).